Consider the following 304-residue polypeptide: HTH-type transcriptional regulator AdmX (304 aa).

Residues 1–58 enclose the HTH lysR-type domain; that stretch reads MKLRHLEIFYTVMTCGSLSRAAESLNISQPAASKSLKNAELKLGFKLFQRVRGKLLPS. Residues 18–37 constitute a DNA-binding region (H-T-H motif); that stretch reads LSRAAESLNISQPAASKSLK.

It belongs to the LysR transcriptional regulatory family.

It localises to the cytoplasm. AdmX-mediated transcription is inhibited by indole-3-acetic and indole-3-pyruvic acids. AdmX recognizes and binds the auxin indole-3-acetic acid (IAA), which causes conformational changes in AdmX that result in the inhibition of the expression of the andrimid gene cluster and the suppression of antibiotic production. It also recognizes indole-3-pyruvic acid (IPA), an intermediate of the main IAA biosynthetic pathway in plants and plant beneficial bacteria, which also prevents andrimid synthesis, but to a much lesser extent. Positively regulates the biosynthesis of andrimid, a broad-spectrum antibiotic, by activating the expression of the adm biosynthetic gene cluster. It specifically binds to a region within the adm promoter. This Serratia plymuthica protein is HTH-type transcriptional regulator AdmX.